Consider the following 172-residue polypeptide: Probable calcium-binding protein CML28 (172 aa).

4 EF-hand domains span residues 1–36 (MDSTELRKVFKMFDKNGDGRITKKELGESFKNFGIF), 37–72 (IPDDELDATMDKIDANGDGCVDVEEFGLLYRSILGD), 95–130 (DEDEGMREAFNVFDQNGDGFITVDELRSVLSSLGLK), and 133–168 (RTADDCRRMISMVDADGDGRVDFKEFKQMMRGGGFA). Residues Asp-14, Asn-16, Asp-18, Arg-20, Glu-25, Asp-50, Asn-52, Asp-54, Cys-56, Glu-61, Asp-108, Asn-110, Asp-112, Glu-119, Asp-146, Asp-148, Asp-150, Arg-152, and Glu-157 each coordinate Ca(2+).

In terms of biological role, potential calcium sensor. The protein is Probable calcium-binding protein CML28 (CML28) of Oryza sativa subsp. japonica (Rice).